A 379-amino-acid polypeptide reads, in one-letter code: MVSKPHGGKLIRRIAAPRTRERILSEQHEYPKVQIDHGRAIDLENIAHGVYSPLKGFLTREDFESVLDHMRLSDDTPWTIPIVLDVEKPEFEEGDAILLYHKETPIARMHVEDIYTYEKEEFALKVFKTKDANHPGVAKVYSMGKYLVGGEIELLNELPNPFAKYTLRPIETRVLFKEKGWKTVVAFQTRNVPHLGHEYVQKAALTFVDGLFINPVLGRKKRGDYKDEVIIKAYEVLFEHYYPKDVAVLATVRYEMRYAGPREAIHHAIMRKNFGATHFIVGRDHAGVGNYYGPYEAWDLFDEFPDLGITPMFIREAFYCKKCGGMVNEKICPHDEKYHVRISGTKLRNMIMRGEKPPEYMMRPEVYEVIRSFDNPFVE.

It belongs to the sulfate adenylyltransferase family.

The enzyme catalyses sulfate + ATP + H(+) = adenosine 5'-phosphosulfate + diphosphate. It functions in the pathway sulfur metabolism; hydrogen sulfide biosynthesis; sulfite from sulfate: step 1/3. The protein is Sulfate adenylyltransferase (sat) of Pyrococcus abyssi (strain GE5 / Orsay).